Here is a 170-residue protein sequence, read N- to C-terminus: MORN repeat-containing protein 5 (170 aa).

MORN repeat units lie at residues 8–30 (YFGE…TDTR), 31–53 (YIGE…SGSR), and 54–75 (FDAI…DGLQ).

Only detected in testis (at protein level).

It localises to the cell projection. Its subcellular location is the cilium. It is found in the flagellum. The chain is MORN repeat-containing protein 5 (Morn5) from Mus musculus (Mouse).